We begin with the raw amino-acid sequence, 261 residues long: uncharacterized protein (261 aa).

The N-terminal stretch at 1-22 (MKSIKRIGLCISLLILIIFVTS) is a signal peptide. Residue Cys-23 is the site of N-palmitoyl cysteine attachment. A lipid anchor (S-diacylglycerol cysteine) is attached at Cys-23.

This sequence belongs to the staphylococcal tandem lipoprotein family.

The protein resides in the cell membrane. This is an uncharacterized protein from Staphylococcus aureus (strain USA300).